Here is a 401-residue protein sequence, read N- to C-terminus: Inositol phosphorylceramide synthase catalytic subunit AUR1 (401 aa).

Topologically, residues 1–41 (MANPFSRWFLSERPPNCHVADLETSLDPHQTLLKVQKYKPA) are cytoplasmic. A helical transmembrane segment spans residues 42–62 (LSDWVHYIFLGSIMLFVFITN). Topologically, residues 63–64 (PA) are lumenal. The chain crosses the membrane as a helical span at residues 65 to 85 (PWIFKILFYCFLGTLFIIPAT). At 86–87 (SQ) the chain is on the cytoplasmic side. The helical transmembrane segment at 88 to 108 (FFFNALPILTWVALYFTSSYF) threads the bilayer. Residues 109–155 (PDDRRPPITVKVLPAVETILYGDNLSDILATSTNSFLDILAWLPYGL) are Lumenal-facing. Asn-132 carries an N-linked (GlcNAc...) asparagine glycan. The chain crosses the membrane as a helical span at residues 156-176 (FHFGAPFVVAAILFVFGPPTV). Residues 177–178 (LQ) are Cytoplasmic-facing. A helical transmembrane segment spans residues 179-199 (GYAFAFGYMNLFGVIMQNVFP). The Lumenal portion of the chain corresponds to 200–245 (AAPPWYKILYGLQSANYDMHGSPGGLARIDKLLGINMYTTAFSNSS). A helical transmembrane segment spans residues 246 to 266 (VIFGAFPSLHSGCATMEALFF). At 267–268 (CY) the chain is on the cytoplasmic side. A helical transmembrane segment spans residues 269–289 (CFPKLKPLFIAYVCWLWWSTM). Over 290-291 (YL) the chain is Lumenal. The helical transmembrane segment at 292–312 (THHYFVDLMAGSVLSYVIFQY) threads the bilayer. Over 313–401 (TKYTHLPIVD…SITSLGVKRA (89 aa)) the chain is Cytoplasmic. Positions 374–401 (VSPSLFDGSTSVSRSSATSITSLGVKRA) are disordered. Over residues 382–395 (STSVSRSSATSITS) the composition is skewed to low complexity. Residues Ser-392 and Ser-395 each carry the phosphoserine modification.

It belongs to the AUR1 family. Component of the inositol phosphorylceramide synthase complex composed of at least AUR1 and KEI1.

It is found in the golgi apparatus. It localises to the golgi stack membrane. The enzyme catalyses an N-(2R-hydroxy-very-long-chain fatty acyl)-(R)-4-hydroxysphingoid base + a 1,2-diacyl-sn-glycero-3-phospho-(1D-myo-inositol) = a 1D-myo-inositol-1-phospho-N-[(R)-2-hydroxy-very-long-chain fatty acyl]-(R)-4-hydroxysphingoid base + a 1,2-diacyl-sn-glycerol. Its activity is regulated as follows. Inhibited by aureobasidin A (AbA), khafrefungin and rustmicin. Functionally, catalytic component of the inositol phosphorylceramide synthase which catalyzes the addition of a phosphorylinositol group onto ceramide to form inositol phosphorylceramide, an essential step in sphingolipid biosynthesis. In Saccharomyces cerevisiae (strain ATCC 204508 / S288c) (Baker's yeast), this protein is Inositol phosphorylceramide synthase catalytic subunit AUR1.